Consider the following 137-residue polypeptide: Endoribonuclease YbeY (137 aa).

3 residues coordinate Zn(2+): His105, His109, and Asp115.

Belongs to the endoribonuclease YbeY family. Requires Zn(2+) as cofactor.

The protein localises to the cytoplasm. In terms of biological role, single strand-specific metallo-endoribonuclease involved in late-stage 70S ribosome quality control and in maturation of the 3' terminus of the 16S rRNA. The sequence is that of Endoribonuclease YbeY from Chlorobium luteolum (strain DSM 273 / BCRC 81028 / 2530) (Pelodictyon luteolum).